The chain runs to 63 residues: MARCRRHIRSRSRSRNQCQRRRRRSHYNRRRTYRRSRRHSRRRRVRRRGCSCRRCSRRRRRRC.

The segment at 1-47 is disordered; it reads MARCRRHIRSRSRSRNQCQRRRRRSHYNRRRTYRRSRRHSRRRRVRR.

Belongs to the protamine P1 family. In terms of tissue distribution, testis.

It is found in the nucleus. The protein resides in the chromosome. Functionally, protamines substitute for histones in the chromatin of sperm during the haploid phase of spermatogenesis. They compact sperm DNA into a highly condensed, stable and inactive complex. In Planigale tenuirostris (Narrow-nosed planigale), this protein is Sperm protamine P1 (PRM1).